The sequence spans 237 residues: Large ribosomal subunit protein uL3 (237 aa).

Disordered stretches follow at residues 133–155 (ASHG…DPGK) and 213–237 (PENA…EGAE). The segment covering 135-150 (HGNSITHRSHGSTGQR) has biased composition (polar residues). Glutamine 151 carries the post-translational modification N5-methylglutamine. Low complexity predominate over residues 220-237 (AGLRAGAKAEAAATEGAE).

The protein belongs to the universal ribosomal protein uL3 family. Part of the 50S ribosomal subunit. Forms a cluster with proteins L14 and L19. Post-translationally, methylated by PrmB.

Functionally, one of the primary rRNA binding proteins, it binds directly near the 3'-end of the 23S rRNA, where it nucleates assembly of the 50S subunit. This Brucella canis (strain ATCC 23365 / NCTC 10854 / RM-666) protein is Large ribosomal subunit protein uL3.